Consider the following 206-residue polypeptide: High frequency lysogenization protein HflD homolog (206 aa).

Belongs to the HflD family.

It is found in the cytoplasm. It localises to the cell inner membrane. In Idiomarina loihiensis (strain ATCC BAA-735 / DSM 15497 / L2-TR), this protein is High frequency lysogenization protein HflD homolog.